The sequence spans 211 residues: Thymidylate kinase (211 aa).

Position 10–17 (G10–S17) interacts with ATP.

This sequence belongs to the thymidylate kinase family.

It carries out the reaction dTMP + ATP = dTDP + ADP. In terms of biological role, phosphorylation of dTMP to form dTDP in both de novo and salvage pathways of dTTP synthesis. This is Thymidylate kinase from Clavibacter sepedonicus (Clavibacter michiganensis subsp. sepedonicus).